The primary structure comprises 888 residues: Lon protease homolog 2, peroxisomal (888 aa).

In terms of domain architecture, Lon N-terminal spans 11 to 255 (LAILPFRNKV…KATELVDRHL (245 aa)). 408–415 (GPPGVGKT) serves as a coordination point for ATP. A Lon proteolytic domain is found at 692–877 (VASAGVSVGL…EDVLENAFEG (186 aa)). Catalysis depends on residues Ser-783 and Lys-826. Positions 886–888 (SKL) match the Microbody targeting signal motif.

The protein belongs to the peptidase S16 family.

The protein localises to the peroxisome matrix. The catalysed reaction is Hydrolysis of proteins in presence of ATP.. ATP-dependent serine protease that mediates the selective degradation of misfolded and unassembled polypeptides in the peroxisomal matrix. Necessary for type 2 peroxisome targeting signal (PTS2)-containing protein processing and facilitates peroxisome matrix protein import. The polypeptide is Lon protease homolog 2, peroxisomal (LON2) (Arabidopsis thaliana (Mouse-ear cress)).